The following is a 692-amino-acid chain: Proprotein convertase subtilisin/kexin type 9 (692 aa).

The signal sequence occupies residues 1–30 (MGTVSSRRSWWPLPLLLLLLLLLGPAGARA). A propeptide spanning residues 31–152 (QEDEDGDYEE…IEEDSSVFAQ (122 aa)) is cleaved from the precursor. Tyr38 bears the Sulfotyrosine mark. Ser47 carries the post-translational modification Phosphoserine. In terms of domain architecture, Inhibitor I9 spans 77–149 (TYVVVLKEET…VDYIEEDSSV (73 aa)). A Peptidase S8 domain is found at 155–461 (PWNLERITPP…GWQLFCRTVW (307 aa)). Catalysis depends on charge relay system residues Asp186 and His226. Disulfide bonds link Cys223–Cys255 and Cys323–Cys358. Residue Ser386 is the Charge relay system of the active site. Positions 450–692 (GAGWQLFCRT…HLAQASQELQ (243 aa)) are C-terminal domain. Intrachain disulfides connect Cys457–Cys527, Cys477–Cys526, and Cys486–Cys509. Residue Asn533 is glycosylated (N-linked (GlcNAc...) asparagine). 6 disulfide bridges follow: Cys534-Cys601, Cys552-Cys600, Cys562-Cys588, Cys608-Cys679, Cys626-Cys678, and Cys635-Cys654. Ser688 carries the phosphoserine modification.

The protein belongs to the peptidase S8 family. Monomer. Can self-associate to form dimers and higher multimers which may have increased LDLR degrading activity. The precursor protein but not the mature protein may form multimers. Interacts with APOB, VLDLR, LRP8/APOER2 and BACE1. The full-length immature form (pro-PCSK9) interacts with SCNN1A, SCNN1B and SCNN1G. The pro-PCSK9 form (via C-terminal domain) interacts with LDLR. Interacts (via the C-terminal domain) with ANXA2 (via repeat Annexin 1); the interaction inhibits the degradation of LDLR. Ca(2+) is required as a cofactor. Post-translationally, cleavage by furin and PCSK5 generates a truncated inactive protein that is unable to induce LDLR degradation. Undergoes autocatalytic cleavage in the endoplasmic reticulum to release the propeptide from the N-terminus and the cleavage of the propeptide is strictly required for its maturation and activation. The cleaved propeptide however remains associated with the catalytic domain through non-covalent interactions, preventing potential substrates from accessing its active site. As a result, it is secreted from cells as a propeptide-containing, enzymatically inactive protein. In terms of processing, phosphorylation protects the propeptide against proteolysis.

The protein resides in the cytoplasm. The protein localises to the secreted. It is found in the endosome. Its subcellular location is the lysosome. It localises to the cell surface. The protein resides in the endoplasmic reticulum. The protein localises to the golgi apparatus. With respect to regulation, its proteolytic activity is autoinhibited by the non-covalent binding of the propeptide to the catalytic domain. Inhibited by EGTA. Functionally, crucial player in the regulation of plasma cholesterol homeostasis. Binds to low-density lipid receptor family members: low density lipoprotein receptor (LDLR), very low density lipoprotein receptor (VLDLR), apolipoprotein E receptor (LRP1/APOER) and apolipoprotein receptor 2 (LRP8/APOER2), and promotes their degradation in intracellular acidic compartments. Acts via a non-proteolytic mechanism to enhance the degradation of the hepatic LDLR through a clathrin LDLRAP1/ARH-mediated pathway. May prevent the recycling of LDLR from endosomes to the cell surface or direct it to lysosomes for degradation. Can induce ubiquitination of LDLR leading to its subsequent degradation. Inhibits intracellular degradation of APOB via the autophagosome/lysosome pathway in a LDLR-independent manner. Involved in the disposal of non-acetylated intermediates of BACE1 in the early secretory pathway. Inhibits epithelial Na(+) channel (ENaC)-mediated Na(+) absorption by reducing ENaC surface expression primarily by increasing its proteasomal degradation. Regulates neuronal apoptosis via modulation of LRP8/APOER2 levels and related anti-apoptotic signaling pathways. The chain is Proprotein convertase subtilisin/kexin type 9 (PCSK9) from Pan paniscus (Pygmy chimpanzee).